The following is a 517-amino-acid chain: Probable bifunctional methylthioribulose-1-phosphate dehydratase/enolase-phosphatase E1 1 (517 aa).

Residues 1–240 (MAAAALNGLK…AIKLYQLGLD (240 aa)) form a methylthioribulose-1-phosphate dehydratase region. A substrate-binding site is contributed by C112. Zn(2+) contacts are provided by H130 and H132. Catalysis depends on E155, which acts as the Proton donor/acceptor; for methylthioribulose-1-phosphate dehydratase activity. H205 contacts Zn(2+). The enolase-phosphatase E1 stretch occupies residues 278–517 (IVLDIEGTTT…FKTITSFSDI (240 aa)). Mg(2+)-binding residues include D281 and E283. Substrate is bound by residues 416-417 (SS) and K450. Position 476 (D476) interacts with Mg(2+).

The protein in the N-terminal section; belongs to the aldolase class II family. MtnB subfamily. This sequence in the C-terminal section; belongs to the HAD-like hydrolase superfamily. MasA/MtnC family. Zn(2+) is required as a cofactor. It depends on Mg(2+) as a cofactor.

The enzyme catalyses 5-(methylsulfanyl)-D-ribulose 1-phosphate = 5-methylsulfanyl-2,3-dioxopentyl phosphate + H2O. The catalysed reaction is 5-methylsulfanyl-2,3-dioxopentyl phosphate + H2O = 1,2-dihydroxy-5-(methylsulfanyl)pent-1-en-3-one + phosphate. It participates in amino-acid biosynthesis; L-methionine biosynthesis via salvage pathway; L-methionine from S-methyl-5-thio-alpha-D-ribose 1-phosphate: step 2/6. It functions in the pathway amino-acid biosynthesis; L-methionine biosynthesis via salvage pathway; L-methionine from S-methyl-5-thio-alpha-D-ribose 1-phosphate: step 3/6. Its pathway is amino-acid biosynthesis; L-methionine biosynthesis via salvage pathway; L-methionine from S-methyl-5-thio-alpha-D-ribose 1-phosphate: step 4/6. This chain is Probable bifunctional methylthioribulose-1-phosphate dehydratase/enolase-phosphatase E1 1, found in Vitis vinifera (Grape).